Consider the following 296-residue polypeptide: Phosphatidylglycerol--prolipoprotein diacylglyceryl transferase (296 aa).

A run of 4 helical transmembrane segments spans residues 10–30, 57–77, 92–112, and 119–139; these read IAFS…LAAF, LLFY…MLFY, VWEG…ACWL, and LHFF…LGFG. Arg140 contributes to the a 1,2-diacyl-sn-glycero-3-phospho-(1'-sn-glycerol) binding site. Transmembrane regions (helical) follow at residues 194–214, 220–240, and 254–274; these read QLYE…TFSM, YAVS…VEFV, and WLTM…VLLA.

It belongs to the Lgt family.

Its subcellular location is the cell inner membrane. The catalysed reaction is L-cysteinyl-[prolipoprotein] + a 1,2-diacyl-sn-glycero-3-phospho-(1'-sn-glycerol) = an S-1,2-diacyl-sn-glyceryl-L-cysteinyl-[prolipoprotein] + sn-glycerol 1-phosphate + H(+). The protein operates within protein modification; lipoprotein biosynthesis (diacylglyceryl transfer). In terms of biological role, catalyzes the transfer of the diacylglyceryl group from phosphatidylglycerol to the sulfhydryl group of the N-terminal cysteine of a prolipoprotein, the first step in the formation of mature lipoproteins. The chain is Phosphatidylglycerol--prolipoprotein diacylglyceryl transferase from Xanthomonas axonopodis pv. citri (strain 306).